The sequence spans 137 residues: ATP synthase epsilon chain (137 aa).

This sequence belongs to the ATPase epsilon chain family. F-type ATPases have 2 components, CF(1) - the catalytic core - and CF(0) - the membrane proton channel. CF(1) has five subunits: alpha(3), beta(3), gamma(1), delta(1), epsilon(1). CF(0) has three main subunits: a, b and c.

The protein resides in the cellular thylakoid membrane. Its function is as follows. Produces ATP from ADP in the presence of a proton gradient across the membrane. This Nostoc punctiforme (strain ATCC 29133 / PCC 73102) protein is ATP synthase epsilon chain.